The following is a 73-amino-acid chain: Beta-defensin 50 (73 aa).

The signal sequence occupies residues 1–23 (MKTLCFLLLTSGLLYLMVKGVGS). 2 cysteine pairs are disulfide-bonded: C34-C63 and C46-C64.

The protein belongs to the beta-defensin family. Highly expressed in prostate. Not expressed in uterus, epididymis, ovary, testis, spleen, submaxillary gland, thymus, thyroid, pancreas, smooth muscle, skeletal muscle, heart, kidney, lung, liver, eye and brain.

It localises to the secreted. Has bactericidal activity. The protein is Beta-defensin 50 (Defb50) of Mus musculus (Mouse).